We begin with the raw amino-acid sequence, 370 residues long: Cytoplasmic dynein intermediate light chain DYN3 (370 aa).

Belongs to the dynein light intermediate chain DYN3 family. As to quaternary structure, the cytoplasmic dynein is composed of at least two heavy chains and a number of intermediate and light chains.

Its subcellular location is the cytoplasm. It is found in the cytoskeleton. Its function is as follows. Component of the cytoplasmic dynein which acts as a motor for the intracellular retrograde motility of vesicles and organelles along microtubules. May play an important role in the proper orientation of the mitotic spindle into the budding daughter cell yeast. Probably required for normal progression of the cell cycle. This chain is Cytoplasmic dynein intermediate light chain DYN3 (DYN3), found in Kluyveromyces lactis (strain ATCC 8585 / CBS 2359 / DSM 70799 / NBRC 1267 / NRRL Y-1140 / WM37) (Yeast).